Consider the following 426-residue polypeptide: Gamma-glutamyl phosphate reductase (426 aa).

Belongs to the gamma-glutamyl phosphate reductase family.

The protein localises to the cytoplasm. It carries out the reaction L-glutamate 5-semialdehyde + phosphate + NADP(+) = L-glutamyl 5-phosphate + NADPH + H(+). It functions in the pathway amino-acid biosynthesis; L-proline biosynthesis; L-glutamate 5-semialdehyde from L-glutamate: step 2/2. Its function is as follows. Catalyzes the NADPH-dependent reduction of L-glutamate 5-phosphate into L-glutamate 5-semialdehyde and phosphate. The product spontaneously undergoes cyclization to form 1-pyrroline-5-carboxylate. This Nitrobacter winogradskyi (strain ATCC 25391 / DSM 10237 / CIP 104748 / NCIMB 11846 / Nb-255) protein is Gamma-glutamyl phosphate reductase.